The chain runs to 112 residues: Toxin-like structure LSTX-D10 (112 aa).

The N-terminal stretch at 1–20 is a signal peptide; the sequence is MMKVLVVVALLVTLISYSSS. Positions 21–41 are excised as a propeptide; sequence EGIDDLEADELLSLMANEQTR. 4 disulfide bridges follow: cysteine 45–cysteine 60, cysteine 52–cysteine 69, cysteine 59–cysteine 84, and cysteine 71–cysteine 82.

The protein belongs to the neurotoxin 19 (CSTX) family. 01 subfamily. In terms of tissue distribution, expressed by the venom gland.

The protein localises to the secreted. This is Toxin-like structure LSTX-D10 from Lycosa singoriensis (Wolf spider).